The chain runs to 312 residues: Probable splicing factor, arginine/serine-rich 1 (312 aa).

Positions 3–73 (ARIYIGRLTS…ERVILDYSKP (71 aa)) constitute an RRM 1 domain. Disordered regions lie at residues 69-125 (DYSK…GRPY) and 196-312 (KMID…DGDN). Residues 74-90 (RGGGGDRGGFGGGGRGG) are compositionally biased toward gly residues. Over residues 103-121 (GRDRFDRYDRGPPRRESRY) the composition is skewed to basic and acidic residues. The 74-residue stretch at 129-202 (HRVVVENLSS…RKIKMIDDSQ (74 aa)) folds into the RRM 2 domain. The span at 206–259 (SRSRSNSRSRSRSRSRDRRRSRSRSSSRSKSRSRSPPKRSRRESKSKSRSRSRS) shows a compositional bias: basic residues.

This sequence belongs to the splicing factor SR family. In terms of processing, extensively phosphorylated on serine residues in the RS domain.

Its subcellular location is the nucleus. In terms of biological role, plays a functionally redundant role in spermatogenesis and growth rate control. The polypeptide is Probable splicing factor, arginine/serine-rich 1 (rsp-1) (Caenorhabditis elegans).